The primary structure comprises 71 residues: MNDLKLLRSKLSTETIEELYKNLNLLKKELFNLRFQQALGELKNTSRFSLVKKSIARIKTELTKRSNSEEY.

It belongs to the universal ribosomal protein uL29 family.

This is Large ribosomal subunit protein uL29 from Rickettsia typhi (strain ATCC VR-144 / Wilmington).